A 270-amino-acid polypeptide reads, in one-letter code: NAD kinase (270 aa).

Asp-62 functions as the Proton acceptor in the catalytic mechanism. NAD(+)-binding positions include 62-63 (DG), Arg-67, 129-130 (ND), Lys-140, Asp-159, Ile-167, 170-175 (TSYSFS), Ala-194, and Gln-227.

It belongs to the NAD kinase family. The cofactor is a divalent metal cation.

It localises to the cytoplasm. It catalyses the reaction NAD(+) + ATP = ADP + NADP(+) + H(+). Its function is as follows. Involved in the regulation of the intracellular balance of NAD and NADP, and is a key enzyme in the biosynthesis of NADP. Catalyzes specifically the phosphorylation on 2'-hydroxyl of the adenosine moiety of NAD to yield NADP. The chain is NAD kinase from Picrophilus torridus (strain ATCC 700027 / DSM 9790 / JCM 10055 / NBRC 100828 / KAW 2/3).